The sequence spans 465 residues: Cysteine--tRNA ligase (465 aa).

A Zn(2+)-binding site is contributed by Cys30. A 'HIGH' region motif is present at residues 32–42; it reads ITVYDYCHVGH. Zn(2+)-binding residues include Cys214, His239, and Glu243. Positions 271–275 match the 'KMSKS' region motif; sequence KMSKS. Lys274 is a binding site for ATP.

The protein belongs to the class-I aminoacyl-tRNA synthetase family. Monomer. Zn(2+) serves as cofactor.

The protein localises to the cytoplasm. The enzyme catalyses tRNA(Cys) + L-cysteine + ATP = L-cysteinyl-tRNA(Cys) + AMP + diphosphate. This is Cysteine--tRNA ligase from Burkholderia ambifaria (strain MC40-6).